Consider the following 104-residue polypeptide: Iron-sulfur cluster assembly protein CyaY (104 aa).

The protein belongs to the frataxin family.

In terms of biological role, involved in iron-sulfur (Fe-S) cluster assembly. May act as a regulator of Fe-S biogenesis. This is Iron-sulfur cluster assembly protein CyaY from Aliivibrio fischeri (strain ATCC 700601 / ES114) (Vibrio fischeri).